We begin with the raw amino-acid sequence, 228 residues long: Sodium channel regulatory subunit beta-4 (228 aa).

Positions 1–30 (MPGARDQGAARARWLGIGLLGLFLLPVSLS) are cleaved as a signal peptide. The region spanning 31-148 (LEVSVGKATT…NDFQHQATIF (118 aa)) is the Ig-like C2-type domain. The Extracellular portion of the chain corresponds to 31–162 (LEVSVGKATT…DKLEEVDNTV (132 aa)). N-linked (GlcNAc...) asparagine glycans are attached at residues asparagine 45, asparagine 71, and asparagine 113. A disulfide bridge links cysteine 53 with cysteine 131. A helical transmembrane segment spans residues 163–183 (TLIILGVVGGVIGLLIFILLV). The Cytoplasmic segment spans residues 184-228 (KKFIAFIIKKTQEKKKECLVSSSGNDNTENGLPGSKAEEKAPTKV). The interval 198–228 (KKECLVSSSGNDNTENGLPGSKAEEKAPTKV) is disordered. The segment covering 203–213 (VSSSGNDNTEN) has biased composition (polar residues). Residues 219–228 (KAEEKAPTKV) are compositionally biased toward basic and acidic residues.

This sequence belongs to the sodium channel auxiliary subunit SCN4B (TC 8.A.17) family. In terms of assembly, a voltage-gated sodium (Nav) channel consists of an ion-conducting pore-forming alpha subunit functional on its own that is regulated by one or more beta subunits. The beta subunit SCN4B is disulfide-linked to the pore-forming alpha subunit. Interacts with SCN1A; regulatory subunit of SCN1A/Nav1.1. Interacts with SCN2A; regulatory subunit of SCN2A/Nav1.2. In terms of processing, contains an interchain disulfide bond with SCN2A.

The protein resides in the cell membrane. Functionally, regulatory subunit of multiple voltage-gated sodium (Nav) channels directly mediating the depolarization of excitable membranes. Navs, also called VGSCs (voltage-gated sodium channels) or VDSCs (voltage-dependent sodium channels), operate by switching between closed and open conformations depending on the voltage difference across the membrane. In the open conformation they allow Na(+) ions to selectively pass through the pore, along their electrochemical gradient. The influx of Na+ ions provokes membrane depolarization, initiating the propagation of electrical signals throughout cells and tissues. The accessory beta subunits participate in localization and functional modulation of the Nav channels. Modulates the activity of SCN1A/Nav1.1. Modulates the activity of SCN2A/Nav1.2. This chain is Sodium channel regulatory subunit beta-4, found in Bos taurus (Bovine).